Here is a 309-residue protein sequence, read N- to C-terminus: Fructosamine-3-kinase (309 aa).

Met1 bears the N-acetylmethionine mark. 89-91 (EHL) is an ATP binding site. The active-site Proton acceptor is the Asp217.

The protein belongs to the fructosamine kinase family. As to quaternary structure, monomer. In terms of tissue distribution, widely expressed. Expressed in erythrocytes.

It catalyses the reaction N(6)-(D-fructosyl)-L-lysyl-[protein] + ATP = N(6)-(3-O-phospho-D-fructosyl)-L-lysyl-[protein] + ADP + H(+). The enzyme catalyses N(6)-D-ribulosyl-L-lysyl-[protein] + ATP = N(6)-(3-O-phospho-D-ribulosyl)-L-lysyl-[protein] + ADP + H(+). It carries out the reaction N(6)-(D-psicosyl)-L-lysyl-[protein] + ATP = N(6)-(3-O-phospho-D-psicosyl)-L-lysyl-[protein] + ADP + H(+). In terms of biological role, fructosamine-3-kinase involved in protein deglycation by mediating phosphorylation of fructoselysine residues on glycated proteins, to generate fructoselysine-3 phosphate. Fructoselysine-3 phosphate adducts are unstable and decompose under physiological conditions. Involved in intracellular deglycation in erythrocytes. Involved in the response to oxidative stress by mediating deglycation of NFE2L2/NRF2, glycation impairing NFE2L2/NRF2 function. Also able to phosphorylate psicosamines and ribulosamines. The polypeptide is Fructosamine-3-kinase (Homo sapiens (Human)).